Consider the following 226-residue polypeptide: PKHD-type hydroxylase Daci_1172 (226 aa).

One can recognise a Fe2OG dioxygenase domain in the interval 78–178 (KVLPPRFNRY…RYASFFWTHS (101 aa)). The Fe cation site is built by His-96, Asp-98, and His-159. Residue Arg-169 participates in 2-oxoglutarate binding.

Fe(2+) is required as a cofactor. The cofactor is L-ascorbate.

The sequence is that of PKHD-type hydroxylase Daci_1172 from Delftia acidovorans (strain DSM 14801 / SPH-1).